The following is a 231-amino-acid chain: 7-cyano-7-deazaguanine synthase (231 aa).

11 to 21 serves as a coordination point for ATP; it reads LSGGLDSATTM. 4 residues coordinate Zn(2+): C195, C205, C208, and C211.

It belongs to the QueC family. Zn(2+) is required as a cofactor.

It catalyses the reaction 7-carboxy-7-deazaguanine + NH4(+) + ATP = 7-cyano-7-deazaguanine + ADP + phosphate + H2O + H(+). It functions in the pathway purine metabolism; 7-cyano-7-deazaguanine biosynthesis. Its function is as follows. Catalyzes the ATP-dependent conversion of 7-carboxy-7-deazaguanine (CDG) to 7-cyano-7-deazaguanine (preQ(0)). This Syntrophus aciditrophicus (strain SB) protein is 7-cyano-7-deazaguanine synthase.